Reading from the N-terminus, the 113-residue chain is Cell cycle protein GpsB (113 aa).

A coiled-coil region spans residues 36–68 (LDMVIKDYSTFTQEIEALQAENIRLVQELDNAP).

The protein belongs to the GpsB family. In terms of assembly, forms polymers through the coiled coil domains. Interacts with PBP1, MreC and EzrA.

Its subcellular location is the cytoplasm. In terms of biological role, divisome component that associates with the complex late in its assembly, after the Z-ring is formed, and is dependent on DivIC and PBP2B for its recruitment to the divisome. Together with EzrA, is a key component of the system that regulates PBP1 localization during cell cycle progression. Its main role could be the removal of PBP1 from the cell pole after pole maturation is completed. Also contributes to the recruitment of PBP1 to the division complex. Not essential for septum formation. The polypeptide is Cell cycle protein GpsB (Listeria innocua serovar 6a (strain ATCC BAA-680 / CLIP 11262)).